A 772-amino-acid polypeptide reads, in one-letter code: Lon protease (772 aa).

The region spanning 6-200 (YPTLPLKNTV…LMHRYLNHEV (195 aa)) is the Lon N-terminal domain. 352-359 (GPPGVGKT) lines the ATP pocket. The Lon proteolytic domain maps to 588–769 (QLAPGVAAGL…EEVLAEAIPD (182 aa)). Catalysis depends on residues serine 675 and lysine 718.

The protein belongs to the peptidase S16 family. As to quaternary structure, homohexamer. Organized in a ring with a central cavity.

The protein localises to the cytoplasm. It catalyses the reaction Hydrolysis of proteins in presence of ATP.. In terms of biological role, ATP-dependent serine protease that mediates the selective degradation of mutant and abnormal proteins as well as certain short-lived regulatory proteins. Required for cellular homeostasis and for survival from DNA damage and developmental changes induced by stress. Degrades polypeptides processively to yield small peptide fragments that are 5 to 10 amino acids long. Binds to DNA in a double-stranded, site-specific manner. This is Lon protease from Nitrosococcus oceani (strain ATCC 19707 / BCRC 17464 / JCM 30415 / NCIMB 11848 / C-107).